We begin with the raw amino-acid sequence, 473 residues long: Keratin, type I cytoskeletal 16 (473 aa).

The segment at 1–116 is head; that stretch reads MTTCSRQFTS…AGGDGLLVGS (116 aa). Residues 117–152 form a coil 1A region; that stretch reads EKVTMQNLNDRLASYLDKVRALEEANADLEVKIRDW. The region spanning 117–428 is the IF rod domain; the sequence is EKVTMQNLND…RLLEGEDAHL (312 aa). The segment at 153-170 is linker 1; it reads YQRQRPSEIKDYSPYFKT. Residues 171–262 are coil 1B; it reads IEDLRNKIIA…KNHEEEMLAL (92 aa). The tract at residues 263-285 is linker 12; that stretch reads RGQTGGDVNVEMDAAPGVDLSRI. The interval 286–424 is coil 2; the sequence is LNEMRDQYEQ…ATYRRLLEGE (139 aa). A tail region spans residues 425–473; sequence DAHLSSQQASGQSYSSREVFTSSSSSSSRQTRPILKEQSSSSFSQGQSS. The interval 428-473 is disordered; that stretch reads LSSQQASGQSYSSREVFTSSSSSSSRQTRPILKEQSSSSFSQGQSS. 2 stretches are compositionally biased toward low complexity: residues 429–452 and 462–473; these read SSQQASGQSYSSREVFTSSSSSSS and QSSSSFSQGQSS.

This sequence belongs to the intermediate filament family. In terms of assembly, heterodimer of a type I and a type II keratin. KRT16 associates with KRT6 isomers (KRT6A or KRT6B). Interacts with TCHP. Interacts with TRADD. In terms of tissue distribution, expressed in the corneal epithelium (at protein level).

Epidermis-specific type I keratin that plays a key role in skin. Acts as a regulator of innate immunity in response to skin barrier breach: required for some inflammatory checkpoint for the skin barrier maintenance. The chain is Keratin, type I cytoskeletal 16 (KRT16) from Homo sapiens (Human).